Here is a 172-residue protein sequence, read N- to C-terminus: Large ribosomal subunit protein uL10 (172 aa).

This sequence belongs to the universal ribosomal protein uL10 family. In terms of assembly, part of the ribosomal stalk of the 50S ribosomal subunit. The N-terminus interacts with L11 and the large rRNA to form the base of the stalk. The C-terminus forms an elongated spine to which L12 dimers bind in a sequential fashion forming a multimeric L10(L12)X complex.

Its function is as follows. Forms part of the ribosomal stalk, playing a central role in the interaction of the ribosome with GTP-bound translation factors. The protein is Large ribosomal subunit protein uL10 of Rhizobium rhizogenes (strain K84 / ATCC BAA-868) (Agrobacterium radiobacter).